The following is a 101-amino-acid chain: Iron-sulfur cluster assembly protein CyaY (101 aa).

The protein belongs to the frataxin family.

Involved in iron-sulfur (Fe-S) cluster assembly. May act as a regulator of Fe-S biogenesis. The polypeptide is Iron-sulfur cluster assembly protein CyaY (Rickettsia felis (strain ATCC VR-1525 / URRWXCal2) (Rickettsia azadi)).